Consider the following 161-residue polypeptide: Type-1 angiotensin II receptor-associated protein (161 aa).

The Extracellular segment spans residues 1–26 (MELPAVNLKVILLVHWLLTTWGCLVF). A helical membrane pass occupies residues 27–47 (SSSYAWGNFTILALGVWAVAQ). Over 48-53 (RDSIDA) the chain is Cytoplasmic. The chain crosses the membrane as a helical span at residues 54-74 (IGMFLGGLVATIFLDIIYISI). The Extracellular segment spans residues 75 to 86 (FYSSVATGDTGR). The helical transmembrane segment at 87–107 (FGAGMAILSLLLKPFSCCLVY) threads the bilayer. The Cytoplasmic portion of the chain corresponds to 108-161 (HMHRERGGELPLRPDFFGPSQEHSAYQTIDSSSDAAADPFASLENKGQAVPRGY). Positions 110-122 (HRERGGELPLRPD) are interaction with AGTR1. The residue at position 127 (Ser127) is a Phosphoserine. Phosphothreonine is present on Thr135. Ser138 is subject to Phosphoserine.

In terms of assembly, interacts with RACK1, and with the C-terminal region of AGTR1. In terms of tissue distribution, ubiquitous but more abundant in kidney, testis and heart.

It is found in the endoplasmic reticulum membrane. The protein resides in the golgi apparatus membrane. The protein localises to the cytoplasmic vesicle membrane. Functionally, appears to be a negative regulator of type-1 angiotensin II receptor-mediated signaling by regulating receptor internalization as well as mechanism of receptor desensitization such as phosphorylation. Also induces a decrease in angiotensin II-stimulated transcriptional activity. May play a role of negative regulator in cardiomyocyte hypertrophy induced by angiotensin II through an inhibition of p38 mitogen-activated protein kinase pathway. This chain is Type-1 angiotensin II receptor-associated protein (Agtrap), found in Mus musculus (Mouse).